The sequence spans 173 residues: Bifunctional protein PyrR (173 aa).

Positions 93 to 105 (IILVDDVLYTGRT) match the PRPP-binding motif.

The protein belongs to the purine/pyrimidine phosphoribosyltransferase family. PyrR subfamily. Homodimer and homohexamer; in equilibrium.

It catalyses the reaction UMP + diphosphate = 5-phospho-alpha-D-ribose 1-diphosphate + uracil. Regulates transcriptional attenuation of the pyrimidine nucleotide (pyr) operon by binding in a uridine-dependent manner to specific sites on pyr mRNA. This disrupts an antiterminator hairpin in the RNA and favors formation of a downstream transcription terminator, leading to a reduced expression of downstream genes. Functionally, also displays a weak uracil phosphoribosyltransferase activity which is not physiologically significant. The protein is Bifunctional protein PyrR of Streptococcus equi subsp. zooepidemicus (strain H70).